Reading from the N-terminus, the 62-residue chain is Probable tautomerase SH1546 (62 aa).

The Proton acceptor; via imino nitrogen role is filled by proline 2.

The protein belongs to the 4-oxalocrotonate tautomerase family.

In Staphylococcus haemolyticus (strain JCSC1435), this protein is Probable tautomerase SH1546.